The primary structure comprises 405 residues: Phosphopentomutase (405 aa).

Positions 10, 303, 308, 344, 345, and 356 each coordinate Mn(2+).

This sequence belongs to the phosphopentomutase family. Mn(2+) is required as a cofactor.

Its subcellular location is the cytoplasm. It catalyses the reaction 2-deoxy-alpha-D-ribose 1-phosphate = 2-deoxy-D-ribose 5-phosphate. The catalysed reaction is alpha-D-ribose 1-phosphate = D-ribose 5-phosphate. Its pathway is carbohydrate degradation; 2-deoxy-D-ribose 1-phosphate degradation; D-glyceraldehyde 3-phosphate and acetaldehyde from 2-deoxy-alpha-D-ribose 1-phosphate: step 1/2. Functionally, isomerase that catalyzes the conversion of deoxy-ribose 1-phosphate (dRib-1-P) and ribose 1-phosphate (Rib-1-P) to deoxy-ribose 5-phosphate (dRib-5-P) and ribose 5-phosphate (Rib-5-P), respectively. This Shewanella pealeana (strain ATCC 700345 / ANG-SQ1) protein is Phosphopentomutase.